Here is a 72-residue protein sequence, read N- to C-terminus: Large ribosomal subunit protein bL31 (72 aa).

Zn(2+) contacts are provided by C16, C18, C38, and C41.

It belongs to the bacterial ribosomal protein bL31 family. Type A subfamily. In terms of assembly, part of the 50S ribosomal subunit. Zn(2+) is required as a cofactor.

In terms of biological role, binds the 23S rRNA. This Azoarcus sp. (strain BH72) protein is Large ribosomal subunit protein bL31.